We begin with the raw amino-acid sequence, 309 residues long: Putative taste receptor type 2 member 33 (309 aa).

Methionine 1 is a topological domain (extracellular). Residues 2–22 (VYFLPIIFSILVVFAFVLGNF) form a helical membrane-spanning segment. Residues 23–46 (SNGFIALVNVIDWVKRQKISSADQ) lie on the Cytoplasmic side of the membrane. Residues 47–67 (ILTALVVSRVGLLWVILLHWY) form a helical membrane-spanning segment. The Extracellular segment spans residues 68–86 (ANVFNSALYSLEVRIVASN). An N-linked (GlcNAc...) asparagine glycan is attached at asparagine 86. A helical membrane pass occupies residues 87–107 (ISAVINHFSIWLAASLSIFYL). Residues 108-127 (LKIANFSNLIFLHLKKRIKS) are Cytoplasmic-facing. A helical membrane pass occupies residues 128 to 148 (VVLVILLGPLVFLICNLAVIT). Topologically, residues 149 to 181 (MDERVWTKEYEGNVTWKIKLRNAIHLSSLTVTT) are extracellular. The N-linked (GlcNAc...) asparagine glycan is linked to asparagine 161. The helical transmembrane segment at 182–202 (LANLIPFTLSLICFLLLICSL) threads the bilayer. The Cytoplasmic portion of the chain corresponds to 203–229 (CKHLKKMQLHSKGSQDPSTKVHIKALQ). A helical membrane pass occupies residues 230 to 250 (TVISFLMLCAIYFLSIMISVW). Topologically, residues 251 to 259 (NLRSLENKP) are extracellular. A helical membrane pass occupies residues 260–280 (VFMFCKAIRFSYPSIHPFILI). Residues 281–309 (WGNKKLKQTFLSVFWQVRYWVKGEKPSSP) are Cytoplasmic-facing.

It belongs to the G-protein coupled receptor T2R family.

It is found in the membrane. Its function is as follows. Putative taste receptor which may play a role in the perception of bitterness. This is Putative taste receptor type 2 member 33 from Homo sapiens (Human).